Consider the following 265-residue polypeptide: Transcription factor BHLH062 (265 aa).

The segment at 1–26 is disordered; it reads MVPRDRVNAAAAGGGGEGRLVQSGIV. Residues 35–48 are basic motif; degenerate; that stretch reads PKRIHKSEREKLKR. Residues 35 to 85 form the bHLH domain; sequence PKRIHKSEREKLKRDKQNDLFNELGNLLEPDRQNNGKACVLGETTRILKDL. The interval 49–85 is helix-loop-helix motif; that stretch reads DKQNDLFNELGNLLEPDRQNNGKACVLGETTRILKDL. Positions 75 to 130 form a coiled coil; it reads LGETTRILKDLLSQVESLRKENSSLKNESHYVALERNELHDDNSMLRTEILELQNE. Residues 200-265 form a disordered region; it reads ESATSEDSEP…TNEEDRIGRS (66 aa). Over residues 210-220 the composition is skewed to basic and acidic residues; sequence SQEHGISDHVT. The segment covering 245-256 has biased composition (polar residues); it reads QDQQCSSGTSGT.

This sequence belongs to the bHLH protein family. Interacts with TIFY11A/JAZ9.

The protein localises to the nucleus. In terms of biological role, transcription factor that plays a positive role in salt stress tolerance. Interacts with TIFY11A/JAZ9 and binds to the promoter of some potassium ion transporter genes to regulate potassium homeostasis during salt stress. The sequence is that of Transcription factor BHLH062 from Oryza sativa subsp. japonica (Rice).